The chain runs to 146 residues: Neutral phospholipase A2 B (146 aa).

A signal peptide spans Met1–Ser21. The propeptide occupies Asn22–Leu27. 7 cysteine pairs are disulfide-bonded: Cys38/Cys98, Cys53/Cys145, Cys55/Cys71, Cys70/Cys126, Cys77/Cys119, Cys87/Cys112, and Cys105/Cys117. 3 residues coordinate Ca(2+): Tyr54, Gly56, and Gly58. Residue His74 is part of the active site. Asp75 serves as a coordination point for Ca(2+). The active site involves Asp120.

The protein belongs to the phospholipase A2 family. Group I subfamily. D49 sub-subfamily. The cofactor is Ca(2+). In terms of tissue distribution, expressed by the venom gland.

It is found in the secreted. It catalyses the reaction a 1,2-diacyl-sn-glycero-3-phosphocholine + H2O = a 1-acyl-sn-glycero-3-phosphocholine + a fatty acid + H(+). In terms of biological role, PLA2 catalyzes the calcium-dependent hydrolysis of the 2-acyl groups in 3-sn-phosphoglycerides. The chain is Neutral phospholipase A2 B from Naja sputatrix (Malayan spitting cobra).